The chain runs to 341 residues: Undecaprenyl-phosphate 4-deoxy-4-formamido-L-arabinose transferase (341 aa).

Transmembrane regions (helical) follow at residues 235–255 (LSIV…ALIV) and 269–289 (LFVL…GMGL).

This sequence belongs to the glycosyltransferase 2 family.

It is found in the cell inner membrane. It catalyses the reaction UDP-4-deoxy-4-formamido-beta-L-arabinose + di-trans,octa-cis-undecaprenyl phosphate = 4-deoxy-4-formamido-alpha-L-arabinopyranosyl di-trans,octa-cis-undecaprenyl phosphate + UDP. Its pathway is glycolipid biosynthesis; 4-amino-4-deoxy-alpha-L-arabinose undecaprenyl phosphate biosynthesis; 4-amino-4-deoxy-alpha-L-arabinose undecaprenyl phosphate from UDP-4-deoxy-4-formamido-beta-L-arabinose and undecaprenyl phosphate: step 1/2. The protein operates within bacterial outer membrane biogenesis; lipopolysaccharide biosynthesis. Functionally, catalyzes the transfer of 4-deoxy-4-formamido-L-arabinose from UDP to undecaprenyl phosphate. The modified arabinose is attached to lipid A and is required for resistance to polymyxin and cationic antimicrobial peptides. The polypeptide is Undecaprenyl-phosphate 4-deoxy-4-formamido-L-arabinose transferase (Pseudomonas fluorescens (strain SBW25)).